Reading from the N-terminus, the 172-residue chain is Adenine phosphoribosyltransferase (172 aa).

Belongs to the purine/pyrimidine phosphoribosyltransferase family. As to quaternary structure, homodimer.

The protein resides in the cytoplasm. The catalysed reaction is AMP + diphosphate = 5-phospho-alpha-D-ribose 1-diphosphate + adenine. It participates in purine metabolism; AMP biosynthesis via salvage pathway; AMP from adenine: step 1/1. Catalyzes a salvage reaction resulting in the formation of AMP, that is energically less costly than de novo synthesis. The protein is Adenine phosphoribosyltransferase of Staphylococcus saprophyticus subsp. saprophyticus (strain ATCC 15305 / DSM 20229 / NCIMB 8711 / NCTC 7292 / S-41).